We begin with the raw amino-acid sequence, 115 residues long: uncharacterized protein (115 aa).

Positions 63–108 (GSPCGFEFREAITCQKTNSDGEIEQGACGKELMSFMECVTRTQCFG) constitute a CHCH domain. 2 consecutive short sequence motifs (cx9C motif) follow at residues 66–76 (CGFEFREAITC) and 90–100 (CGKELMSFMEC). 2 disulfide bridges follow: cysteine 66–cysteine 100 and cysteine 76–cysteine 90.

This is an uncharacterized protein from Caenorhabditis elegans.